Here is a 948-residue protein sequence, read N- to C-terminus: P cell-type agglutination protein map4 (948 aa).

A signal peptide spans 1–23; sequence MNSYAILLSLFFSFERLLTLANA. 3 N-linked (GlcNAc...) asparagine glycosylation sites follow: asparagine 31, asparagine 32, and asparagine 57. 2 disordered regions span residues 136–174 and 253–333; these read IPRG…IGTG and FYET…PTTY. A compositionally biased stretch (low complexity) spans 149–174; the sequence is PTYSASDSSATTITSSSPSTSIIGTG. Residues 253 to 264 show a composition bias toward polar residues; that stretch reads FYETKSSTSSVP. Low complexity predominate over residues 265–332; the sequence is TQTIDSSSFT…PSLSSALPTT (68 aa). An N-linked (GlcNAc...) asparagine glycan is attached at asparagine 383. A disordered region spans residues 408 to 432; sequence LTSSTKKIPSTTLPTSSKMITTTTP. Asparagine 436, asparagine 469, asparagine 491, asparagine 522, asparagine 553, asparagine 568, and asparagine 598 each carry an N-linked (GlcNAc...) asparagine glycan. 5 repeat units span residues 617-652, 653-688, 689-724, 725-760, and 761-796. Residues 617–796 are 5 X 36 AA approximate tandem repeats; sequence SYVTETTTSG…GTVLIDVPTP (180 aa). In terms of domain architecture, DIPSY spans 796–948; that stretch reads PTASSSPFPS…ANVVLRALEY (153 aa). N-linked (GlcNAc...) asparagine glycosylation is present at asparagine 921.

This sequence belongs to the mam3/map4 family.

Its subcellular location is the cell surface. Its function is as follows. P cell-type specific protein which involved in agglutination during conjugation. The sequence is that of P cell-type agglutination protein map4 from Schizosaccharomyces pombe (strain 972 / ATCC 24843) (Fission yeast).